The chain runs to 146 residues: Hemoglobin subunit beta (146 aa).

N-acetylvaline is present on V1. The 145-residue stretch at 2–146 folds into the Globin domain; that stretch reads HLTAEEKSAV…VANALAHKYH (145 aa). T12 bears the Phosphothreonine mark. S44 is modified (phosphoserine). K59 is subject to N6-acetyllysine. H63 is a binding site for heme b. K82 is subject to N6-acetyllysine. H92 contacts heme b. Position 93 is an S-nitrosocysteine (C93). An N6-acetyllysine modification is found at K144.

The protein belongs to the globin family. Heterotetramer of two alpha chains and two beta chains. Red blood cells.

Its function is as follows. Involved in oxygen transport from the lung to the various peripheral tissues. In Meles meles (Eurasian badger), this protein is Hemoglobin subunit beta (HBB).